The following is a 270-amino-acid chain: D-aminoacyl-tRNA deacylase (270 aa).

This sequence belongs to the DtdA deacylase family. In terms of assembly, monomer. The cofactor is Zn(2+).

It carries out the reaction a D-aminoacyl-tRNA + H2O = a tRNA + a D-alpha-amino acid + H(+). It catalyses the reaction glycyl-tRNA(Ala) + H2O = tRNA(Ala) + glycine + H(+). Functionally, D-aminoacyl-tRNA deacylase with broad substrate specificity. By recycling D-aminoacyl-tRNA to D-amino acids and free tRNA molecules, this enzyme counteracts the toxicity associated with the formation of D-aminoacyl-tRNA entities in vivo. The sequence is that of D-aminoacyl-tRNA deacylase from Pyrococcus furiosus (strain ATCC 43587 / DSM 3638 / JCM 8422 / Vc1).